We begin with the raw amino-acid sequence, 395 residues long: Lipoyl synthase, mitochondrial (395 aa).

The transit peptide at 1-14 (MISLRSISRSPAVQ) directs the protein to the mitochondrion. Cys112, Cys117, Cys123, Cys142, Cys146, Cys149, and Ser357 together coordinate [4Fe-4S] cluster. The Radical SAM core domain occupies 127–346 (KKSEATATIM…RDTALQMGFL (220 aa)).

Belongs to the radical SAM superfamily. Lipoyl synthase family. [4Fe-4S] cluster is required as a cofactor.

The protein resides in the mitochondrion. The catalysed reaction is [[Fe-S] cluster scaffold protein carrying a second [4Fe-4S](2+) cluster] + N(6)-octanoyl-L-lysyl-[protein] + 2 oxidized [2Fe-2S]-[ferredoxin] + 2 S-adenosyl-L-methionine + 4 H(+) = [[Fe-S] cluster scaffold protein] + N(6)-[(R)-dihydrolipoyl]-L-lysyl-[protein] + 4 Fe(3+) + 2 hydrogen sulfide + 2 5'-deoxyadenosine + 2 L-methionine + 2 reduced [2Fe-2S]-[ferredoxin]. The protein operates within protein modification; protein lipoylation via endogenous pathway; protein N(6)-(lipoyl)lysine from octanoyl-[acyl-carrier-protein]: step 2/2. Its function is as follows. Catalyzes the radical-mediated insertion of two sulfur atoms into the C-6 and C-8 positions of the octanoyl moiety bound to the lipoyl domains of lipoate-dependent enzymes, thereby converting the octanoylated domains into lipoylated derivatives. This Debaryomyces hansenii (strain ATCC 36239 / CBS 767 / BCRC 21394 / JCM 1990 / NBRC 0083 / IGC 2968) (Yeast) protein is Lipoyl synthase, mitochondrial.